A 348-amino-acid polypeptide reads, in one-letter code: Trace amine-associated receptor 9 (348 aa).

Topologically, residues 1 to 33 (MTSDFSPEPPMELCYENVNGSCIKSSYAPWPRA) are extracellular. N19 carries N-linked (GlcNAc...) asparagine glycosylation. Disulfide bonds link C22/C186 and C105/C190. A helical membrane pass occupies residues 34–58 (ILYGVLGLGALLAVFGNLLVIIAIL). The Cytoplasmic segment spans residues 59–68 (HFKQLHTPTN). A helical transmembrane segment spans residues 69–90 (FLVASLACADFLVGVTVMPFST). The Extracellular segment spans residues 91–105 (VRSVESCWYFGESYC). The chain crosses the membrane as a helical span at residues 106 to 128 (KFHTCFDTSFCFASLFHLCCISI). Spermidine-binding residues include D112 and T113. The Cytoplasmic segment spans residues 129–148 (DRYIAVTDPLTYPTKFTVSV). A helical transmembrane segment spans residues 149-170 (SGLCIALSWFFSVTYSFSIFYT). The Extracellular portion of the chain corresponds to 171–196 (GANEEGIEELVVALTCVGGCQAPLNQ). The interval 174–187 (EEGIEELVVALTCV) is extracellular Loop 2 (ECL2). A helical membrane pass occupies residues 197-218 (NWVLLCFLLFFLPTVVMVFLYG). Residues 219–256 (RIFLVAKYQARKIEGTANQAQASSESYKERVAKRERKA) lie on the Cytoplasmic side of the membrane. The helical transmembrane segment at 257–280 (AKTLGIAMAAFLVSWLPYIIDAVI) threads the bilayer. Topologically, residues 281–293 (DAYMNFITPAYVY) are extracellular. The helical transmembrane segment at 294–314 (EILVWCVYYNSAMNPLIYAFF) threads the bilayer. The Cytoplasmic portion of the chain corresponds to 315–348 (YPWFRKAIKLIVSGKVFRADSSTTNLFSEEAGAG).

This sequence belongs to the G-protein coupled receptor 1 family. In terms of tissue distribution, specifically expressed in neurons of the olfactory epithelium.

The protein resides in the cell membrane. Its function is as follows. Olfactory receptor specific for trace amines, such as triethylamine, N,N-dimethylcyclohexylamine (DMCHA), beta-phenylethylamine (beta-PEA), cadaverine (CAD) and polyamines such as spermine and spermidine. Trace amine compounds are enriched in animal body fluids and act on trace amine-associated receptors (TAARs) to elicit both intraspecific and interspecific innate behaviors. Trace amine-binding causes a conformation change that triggers signaling via G(s)-class of G alpha proteins (GNAL or GNAS). In mature olfactory sensory neurons, Taar9 is coupled with GNAL/G(olf)G alpha protein and mediates activation of adenylate cyclase activity to activate cAMP signaling and eventually transmit odorant signals to achieve membrane depolarization. In immature olfactory sensory neurons, Taar9 is coupled with GNAS/G(s) G alpha proteins. In Mus musculus (Mouse), this protein is Trace amine-associated receptor 9.